A 253-amino-acid polypeptide reads, in one-letter code: Zinc finger protein GIS (253 aa).

Residues 1–10 show a composition bias toward acidic residues; that stretch reads MDEATGETET. The segment at 1 to 85 is disordered; sequence MDEATGETET…GDNSTDNNSI (85 aa). Polar residues-rich tracts occupy residues 11–21, 49–63, and 76–85; these read QDFMNVESFSQ, SITT…PYQT, and GDNSTDNNSI. The segment at 91 to 113 adopts a C2H2-type zinc-finger fold; the sequence is FECHYCFRNFPTSQALGGHQNAH.

As to expression, expressed in inflorescence meristems, floral meristems and stem epidermis.

It is found in the nucleus. Functionally, probable transcription factor required for the initiation of inflorescence trichomes in response to gibberellin (GA). Mediates the induction of GL1 expression by GA in inflorescence organs and is antagonized in its action by the DELLA repressor GAI. Acts upstream of the trichome initiation regulators GL1 and GL3, and downstream of the GA signaling repressor SPINDLY (SPY). Does not play a significant role in the cytokinin response. Controls trichome branching through GA signaling. Acts downstream of the key regulator STICHEL (STI) in an endoreduplication-independent pathway. Controls trichome cell division indirectly by acting downstream of a key endoreduplication regulator SIAMESE (SIM). This Arabidopsis thaliana (Mouse-ear cress) protein is Zinc finger protein GIS (GIS).